A 186-amino-acid chain; its full sequence is Biofilm operon icaADBC HTH-type negative transcriptional regulator IcaR (186 aa).

The region spanning 1-59 (MKDKIIDNAITLFSEKGYDGTTLDDIAKSVNIKKASLYYHFDSKKSIYEQSVKCCFDYL) is the HTH tetR-type domain. Positions 22–41 (TLDDIAKSVNIKKASLYYHF) form a DNA-binding region, H-T-H motif.

Homodimer.

In terms of biological role, represses transcription of the icaADBC operon necessary for biofilm production. The polypeptide is Biofilm operon icaADBC HTH-type negative transcriptional regulator IcaR (icaR) (Staphylococcus aureus (strain NCTC 8325 / PS 47)).